The primary structure comprises 658 residues: UvrABC system protein B (658 aa).

One can recognise a Helicase ATP-binding domain in the interval A26–P414. G39–T46 lines the ATP pocket. A Beta-hairpin motif is present at residues Y92–I115. The Helicase C-terminal domain occupies Q430–I592. Residues D622–G658 enclose the UVR domain.

The protein belongs to the UvrB family. As to quaternary structure, forms a heterotetramer with UvrA during the search for lesions. Interacts with UvrC in an incision complex.

Its subcellular location is the cytoplasm. The UvrABC repair system catalyzes the recognition and processing of DNA lesions. A damage recognition complex composed of 2 UvrA and 2 UvrB subunits scans DNA for abnormalities. Upon binding of the UvrA(2)B(2) complex to a putative damaged site, the DNA wraps around one UvrB monomer. DNA wrap is dependent on ATP binding by UvrB and probably causes local melting of the DNA helix, facilitating insertion of UvrB beta-hairpin between the DNA strands. Then UvrB probes one DNA strand for the presence of a lesion. If a lesion is found the UvrA subunits dissociate and the UvrB-DNA preincision complex is formed. This complex is subsequently bound by UvrC and the second UvrB is released. If no lesion is found, the DNA wraps around the other UvrB subunit that will check the other stand for damage. The chain is UvrABC system protein B from Listeria monocytogenes serotype 4b (strain F2365).